A 79-amino-acid chain; its full sequence is Probable [Fe-S]-dependent transcriptional repressor (79 aa).

Positions 56, 61, 64, and 70 each coordinate iron-sulfur cluster.

The protein belongs to the FeoC family.

Functionally, may function as a transcriptional regulator that controls feoABC expression. The chain is Probable [Fe-S]-dependent transcriptional repressor from Serratia proteamaculans (strain 568).